A 171-amino-acid polypeptide reads, in one-letter code: uncharacterized protein (171 aa).

The chain crosses the membrane as a helical span at residues 5 to 25 (FLLTIFALWVGGFGYYLYLIN).

The protein localises to the membrane. This is an uncharacterized protein from Rickettsia conorii (strain ATCC VR-613 / Malish 7).